Consider the following 215-residue polypeptide: Large ribosomal subunit protein uL3 (215 aa).

Glutamine 151 carries the N5-methylglutamine modification.

This sequence belongs to the universal ribosomal protein uL3 family. Part of the 50S ribosomal subunit. Forms a cluster with proteins L14 and L19. Post-translationally, methylated by PrmB.

One of the primary rRNA binding proteins, it binds directly near the 3'-end of the 23S rRNA, where it nucleates assembly of the 50S subunit. The sequence is that of Large ribosomal subunit protein uL3 from Rickettsia bellii (strain OSU 85-389).